The primary structure comprises 219 residues: Membrin-12 (219 aa).

A2 carries the post-translational modification N-acetylalanine. Topologically, residues 2 to 197 (ASGTVGGLSE…LIERRNRVDT (196 aa)) are cytoplasmic. The chain crosses the membrane as a helical; Anchor for type IV membrane protein span at residues 198 to 215 (WIKYAGMIATLVILYLFI). Residues 216-219 (RWTR) lie on the Vesicular side of the membrane.

It belongs to the GOSR2 family.

It localises to the golgi apparatus membrane. Its function is as follows. Involved in transport of proteins from the cis/medial-Golgi to the trans-Golgi network. The protein is Membrin-12 (MEMB12) of Arabidopsis thaliana (Mouse-ear cress).